We begin with the raw amino-acid sequence, 251 residues long: MSEGESKSTHFGYKTVEVDKKAELVAGVFHSVAAKYDIMNDVMSFGIHRFWKRYTIEVSGARPGMKVLDLAGGTGDLTAKFSHLVGDKGEVVLADINDSMLKVGRTKLRDKGIVNNVSYVQANAEALPFPDNHFDIITIAFGLRNVTDKDAALRSMNRVLKPGGKLLVLEFSKPQHEIMRKVYDLYSFKVLPKMGELITKDADSYEYLAESIRMHPDQDTLKQMMVDAGFEQVDYTNMTDGIVALHRGYKF.

S-adenosyl-L-methionine contacts are provided by residues Thr-74, Asp-95, and 123-124; that span reads NA.

This sequence belongs to the class I-like SAM-binding methyltransferase superfamily. MenG/UbiE family.

The enzyme catalyses a 2-demethylmenaquinol + S-adenosyl-L-methionine = a menaquinol + S-adenosyl-L-homocysteine + H(+). It carries out the reaction a 2-methoxy-6-(all-trans-polyprenyl)benzene-1,4-diol + S-adenosyl-L-methionine = a 5-methoxy-2-methyl-3-(all-trans-polyprenyl)benzene-1,4-diol + S-adenosyl-L-homocysteine + H(+). It participates in quinol/quinone metabolism; menaquinone biosynthesis; menaquinol from 1,4-dihydroxy-2-naphthoate: step 2/2. The protein operates within cofactor biosynthesis; ubiquinone biosynthesis. Its function is as follows. Methyltransferase required for the conversion of demethylmenaquinol (DMKH2) to menaquinol (MKH2) and the conversion of 2-polyprenyl-6-methoxy-1,4-benzoquinol (DDMQH2) to 2-polyprenyl-3-methyl-6-methoxy-1,4-benzoquinol (DMQH2). The chain is Ubiquinone/menaquinone biosynthesis C-methyltransferase UbiE from Shewanella baltica (strain OS223).